Reading from the N-terminus, the 305-residue chain is Superkiller complex protein 8 (305 aa).

N-acetylmethionine is present on Met-1. The residue at position 2 (Thr-2) is an N-acetylthreonine; in WD repeat-containing protein 61, N-terminally processed. WD repeat units follow at residues 14–57 (AHDD…LELQ), 62–101 (GHQL…QMKS), 104–143 (AGPV…KEYS), 146–187 (TRGK…HTLE), 188–227 (GHAM…LAGT), 230–269 (GHAS…CIHT), and 272–305 (DHQD…DCPI).

Belongs to the SKI8 family. As to quaternary structure, component of the PAF1 complex, which consists of CDC73, PAF1, LEO1, CTR9, RTF1 and SKIC8. The PAF1 complex interacts with PHF5A. Within the PAF1 complex interacts directly with PHF5A. Component of the SKI complex which consists of SKIC2, SKIC3 and SKIC8.

The protein localises to the nucleus. Its subcellular location is the cytoplasm. In terms of biological role, component of the PAF1 complex (PAF1C) which has multiple functions during transcription by RNA polymerase II and is implicated in regulation of development and maintenance of embryonic stem cell pluripotency. PAF1C associates with RNA polymerase II through interaction with POLR2A CTD non-phosphorylated and 'Ser-2'- and 'Ser-5'-phosphorylated forms and is involved in transcriptional elongation, acting both independently and synergistically with TCEA1 and in cooperation with the DSIF complex and HTATSF1. PAF1C is required for transcription of Hox and Wnt target genes. PAF1C is involved in hematopoiesis and stimulates transcriptional activity of KMT2A/MLL1; it promotes leukemogenesis through association with KMT2A/MLL1-rearranged oncoproteins, such as KMT2A/MLL1-MLLT3/AF9 and KMT2A/MLL1-MLLT1/ENL. PAF1C is involved in histone modifications such as ubiquitination of histone H2B and methylation on histone H3 'Lys-4' (H3K4me3). PAF1C recruits the RNF20/40 E3 ubiquitin-protein ligase complex and the E2 enzyme UBE2A or UBE2B to chromatin which mediate monoubiquitination of 'Lys-120' of histone H2B (H2BK120ub1); UB2A/B-mediated H2B ubiquitination is proposed to be coupled to transcription. PAF1C is involved in mRNA 3' end formation probably through association with cleavage and poly(A) factors. In case of infection by influenza A strain H3N2, PAF1C associates with viral NS1 protein, thereby regulating gene transcription. Required for mono- and trimethylation on histone H3 'Lys-4' (H3K4me3), dimethylation on histone H3 'Lys-79' (H3K4me3). Required for Hox gene transcription. Also acts as a component of the SKI complex, a multiprotein complex that assists the RNA-degrading exosome during the mRNA decay and quality-control pathways. The SKI complex catalyzes mRNA extraction from 80S ribosomal complexes in the 3'-5' direction and channels mRNA to the cytosolic exosome for degradation. SKI-mediated extraction of mRNA from stalled ribosomes allow binding of the Pelota-HBS1L complex and subsequent ribosome disassembly by ABCE1 for ribosome recycling. The chain is Superkiller complex protein 8 (Skic8) from Mus musculus (Mouse).